The sequence spans 196 residues: MPVGVPKVPFRAPGDEDATWVDLYNRLYRERLLFLAQDINHEIANQLMGLMVYLSAEDSNKDIFSFINCPGGSVIPGVGLFDMMQAIVPDVHTICMGVAASMGSFILIGGEMPKRIALPHARIMIHQPASSYYDGSAADFHNESKHVTMLRDYITRCYIERTDQPGEVIQRDLNRDVFMSATEAQAYGIVDVVAEG.

The Nucleophile role is filled by Ser-101. Residue His-126 is part of the active site.

It belongs to the peptidase S14 family. In terms of assembly, component of the chloroplastic Clp protease core complex.

The protein resides in the plastid. It is found in the chloroplast stroma. The catalysed reaction is Hydrolysis of proteins to small peptides in the presence of ATP and magnesium. alpha-casein is the usual test substrate. In the absence of ATP, only oligopeptides shorter than five residues are hydrolyzed (such as succinyl-Leu-Tyr-|-NHMec, and Leu-Tyr-Leu-|-Tyr-Trp, in which cleavage of the -Tyr-|-Leu- and -Tyr-|-Trp bonds also occurs).. In terms of biological role, cleaves peptides in various proteins in a process that requires ATP hydrolysis. Has a chymotrypsin-like activity. Plays a major role in the degradation of misfolded proteins. The protein is ATP-dependent Clp protease proteolytic subunit of Pinus thunbergii (Japanese black pine).